Here is a 216-residue protein sequence, read N- to C-terminus: Orotate phosphoribosyltransferase (216 aa).

Lysine 30 provides a ligand contact to 5-phospho-alpha-D-ribose 1-diphosphate. 38-39 contacts orotate; that stretch reads FF. 5-phospho-alpha-D-ribose 1-diphosphate is bound by residues 75–76, arginine 102, lysine 103, lysine 106, histidine 108, and 128–136; these read YK and DDVITAGTA. Orotate contacts are provided by threonine 132 and arginine 160.

This sequence belongs to the purine/pyrimidine phosphoribosyltransferase family. PyrE subfamily. As to quaternary structure, homodimer. Mg(2+) is required as a cofactor.

It catalyses the reaction orotidine 5'-phosphate + diphosphate = orotate + 5-phospho-alpha-D-ribose 1-diphosphate. It participates in pyrimidine metabolism; UMP biosynthesis via de novo pathway; UMP from orotate: step 1/2. In terms of biological role, catalyzes the transfer of a ribosyl phosphate group from 5-phosphoribose 1-diphosphate to orotate, leading to the formation of orotidine monophosphate (OMP). The chain is Orotate phosphoribosyltransferase from Acinetobacter baumannii (strain ACICU).